We begin with the raw amino-acid sequence, 257 residues long: Gasdermin-like protein rcd-1-1 (257 aa).

It belongs to the gasdermin family. As to quaternary structure, heterooligomer; the heterooligomer with rcd-1-2 forms a ring-shaped pore complex when inserted in the membrane.

The protein localises to the cytoplasm. The protein resides in the cell membrane. Functionally, gasdermin-like protein involved in heterokaryon incompatibility, a process that ensures that during spontaneous vegetative cell fusion, only compatible cells from the same colony survive (non-self-recognition). In N.crassa, the rcd-1 locus exists as 2 incompatible alleles, rcd-1-1 (this entry) and rcd-1-2 (AC P0DW10). During the allorecognition process, forms a heterooligomer with rcd-1-2, thereby forming a functional gasdermin-like complex that binds to membranes and forms pores, triggering cell death. Binds negatively charged phospholipids, such as cardiolipin and phosphatidylserine. Also binds to phosphoinositides, preferentially to phosphatidylinositol-3-phosphate (PtdIns-3-P), PtdIns-5-P and PtdIns-3,5-P2. In Neurospora crassa (strain ATCC 24698 / 74-OR23-1A / CBS 708.71 / DSM 1257 / FGSC 987), this protein is Gasdermin-like protein rcd-1-1.